A 121-amino-acid polypeptide reads, in one-letter code: Methylglyoxal synthase (121 aa).

Residues 1–121 form the MGS-like domain; sequence MMKVALIAHD…SAELFLRALN (121 aa). Substrate-binding positions include His9, Lys13, 35–38, and 55–56; these read TGTT and SG. The active-site Proton donor/acceptor is Asp61. His88 is a substrate binding site.

Belongs to the methylglyoxal synthase family.

The catalysed reaction is dihydroxyacetone phosphate = methylglyoxal + phosphate. In terms of biological role, catalyzes the formation of methylglyoxal from dihydroxyacetone phosphate. This chain is Methylglyoxal synthase, found in Carboxydothermus hydrogenoformans (strain ATCC BAA-161 / DSM 6008 / Z-2901).